We begin with the raw amino-acid sequence, 529 residues long: Putative UPF0481 protein At3g02645 (529 aa).

Asn365 and Asn403 each carry an N-linked (GlcNAc...) asparagine glycan. The helical transmembrane segment at 498 to 518 threads the bilayer; it reads ILAFLAAVLLLMLVSLQLFSL.

It belongs to the UPF0481 family.

The protein resides in the membrane. This Arabidopsis thaliana (Mouse-ear cress) protein is Putative UPF0481 protein At3g02645.